The following is a 295-amino-acid chain: Putative aquaporin-12A (295 aa).

A helical transmembrane segment spans residues 1 to 21; sequence MAGLNVSLSFFFATFALCEAA. Residues 22-54 are Extracellular-facing; the sequence is RRASKALLPVGAYEVFAREAMRTLVELGPWAGD. A helical transmembrane segment spans residues 55-75; sequence FGPDLLLTLLFLLFLAHGVTL. The Cytoplasmic portion of the chain corresponds to 76 to 99; the sequence is DGASANPTVSLQEFLMAEQSLPGT. Positions 77–114 form an intramembrane region, discontinuously helical; it reads GASANPTVSLQEFLMAEQSLPGTLLKLAAQGLGMQAAC. The NPA 1 motif lies at 81–83; it reads NPT. The helical transmembrane segment at 100–126 threads the bilayer; the sequence is LLKLAAQGLGMQAACTLMRLCWAWELS. Residues 127-145 are Extracellular-facing; the sequence is DLHLLQSLMAQSCSSALRT. The helical transmembrane segment at 146–166 threads the bilayer; it reads SVPHGALVEAACAFCFHLTLL. Residues 167–178 are Cytoplasmic-facing; the sequence is HLRHSPPAYSGP. A helical membrane pass occupies residues 179 to 199; it reads AVALLVTVTAYTAGPFTSAFF. The segment at residues 195 to 206 is an intramembrane region (discontinuously helical); the sequence is TSAFFNPALAAS. The NPA 2 motif lies at 200-202; it reads NPA. The Extracellular portion of the chain corresponds to 200 to 215; sequence NPALAASVTFACSGHT. Residues 216–236 traverse the membrane as a helical segment; the sequence is LLEYVQVYWLGPLTGMVLAVL. Residues 237-295 lie on the Cytoplasmic side of the membrane; it reads LHQGRLPHLFQRNLFYGQKNKYRAPRGKPAPASGDTQTPAKGSSVREPGRSGVEGPHSS. The segment at 257–295 is disordered; the sequence is KYRAPRGKPAPASGDTQTPAKGSSVREPGRSGVEGPHSS.

Belongs to the MIP/aquaporin (TC 1.A.8) family. AQP11/AQP12 subfamily. In terms of assembly, homotetramer; each monomer provides an independent water pore. Restricted to the pancreas.

It localises to the membrane. The enzyme catalyses H2O(in) = H2O(out). In terms of biological role, putative aquaporin. Could form homotetrameric transmembrane channels, with each monomer independently mediating water transport across the plasma membrane along its osmotic gradient. The polypeptide is Putative aquaporin-12A (Homo sapiens (Human)).